The primary structure comprises 218 residues: Nonsense-mediated decay protein 4 (218 aa).

The protein localises to the cytoplasm. In terms of biological role, involved in nonsense-mediated decay of mRNAs containing premature stop codons. This chain is Nonsense-mediated decay protein 4 (NMD4), found in Saccharomyces cerevisiae (strain ATCC 204508 / S288c) (Baker's yeast).